A 487-amino-acid polypeptide reads, in one-letter code: Transcriptional adapter ADA2b (487 aa).

Positions 1 to 13 (MGRSRGNFQNFED) are enriched in polar residues. Residues 1 to 25 (MGRSRGNFQNFEDPTQRTRKKKNAA) are disordered. The segment at 42–98 (GGKYNCDYCQKDITGKIRIKCAVCPDFDLCIECMSVGAEITPHKCDHPYRVMGNLTF) adopts a ZZ-type zinc-finger fold. Zn(2+) is bound by residues cysteine 47, cysteine 50, cysteine 62, cysteine 65, cysteine 71, cysteine 74, histidine 84, and histidine 88. The SANT domain maps to 100–152 (LICPDWSADDEMLLLEGLEIYGLGNWAEVAEHVGTKSKEQCLEHYRNIYLNSP). Lysine 216 carries the N6-acetyllysine; by GCN5 modification. Residues 368–383 (RKRKRENEEGMNRGKE) are compositionally biased toward basic and acidic residues. The disordered stretch occupies residues 368-388 (RKRKRENEEGMNRGKESGQFG). The region spanning 401-487 (QASSSYVNDL…MLVKKGIAQL (87 aa)) is the SWIRM domain.

As to quaternary structure, interacts in vitro with the HAT domain of GCN5 and with the DNA-binding domain of the transcriptional activator DREB1B/CBF1. Interacts with BZIP11. Post-translationally, acetylated in vitro by GCN5, but acetylation is not essential for biological activity. Expressed in roots, leaves, stems, flowers and siliques, with the strongest activity in the meristematic zones.

The protein resides in the nucleus. Functionally, required for the function of some acidic activation domains, which activate transcription from a distant site. The exact mechanism of action is not yet known. ADA2 stimulates the acetyltransferase activity of GCN5 on free histones or nucleosomes, probably by opening up the promoter region. Mediates auxin and cytokinin signals in the control of cell proliferation and might be involved in repression of a freezing tolerance pathway at warm temperature. Involved in the positive regulation of salt-induced gene expression by maintaining locus-specific acetylation of histones H4 and H3. This is Transcriptional adapter ADA2b (ADA2B) from Arabidopsis thaliana (Mouse-ear cress).